A 119-amino-acid chain; its full sequence is Ribosome-binding factor A (119 aa).

The protein belongs to the RbfA family. Monomer. Binds 30S ribosomal subunits, but not 50S ribosomal subunits or 70S ribosomes.

It localises to the cytoplasm. In terms of biological role, one of several proteins that assist in the late maturation steps of the functional core of the 30S ribosomal subunit. Associates with free 30S ribosomal subunits (but not with 30S subunits that are part of 70S ribosomes or polysomes). Required for efficient processing of 16S rRNA. May interact with the 5'-terminal helix region of 16S rRNA. This Mycoplasmoides gallisepticum (strain R(low / passage 15 / clone 2)) (Mycoplasma gallisepticum) protein is Ribosome-binding factor A.